The primary structure comprises 395 residues: Elongation factor Tu (395 aa).

The tr-type G domain occupies 10 to 204 (KPHVNIGTIG…AVDEYIPTPQ (195 aa)). A G1 region spans residues 19 to 26 (GHVDHGKT). 19–26 (GHVDHGKT) provides a ligand contact to GTP. Thr-26 lines the Mg(2+) pocket. A G2 region spans residues 60–64 (GITIS). The G3 stretch occupies residues 81–84 (DCPG). GTP contacts are provided by residues 81–85 (DCPGH) and 136–139 (NKCD). The tract at residues 136 to 139 (NKCD) is G4. A G5 region spans residues 174-176 (SAL).

The protein belongs to the TRAFAC class translation factor GTPase superfamily. Classic translation factor GTPase family. EF-Tu/EF-1A subfamily. Monomer.

The protein resides in the cytoplasm. It carries out the reaction GTP + H2O = GDP + phosphate + H(+). In terms of biological role, GTP hydrolase that promotes the GTP-dependent binding of aminoacyl-tRNA to the A-site of ribosomes during protein biosynthesis. The sequence is that of Elongation factor Tu from Anoxybacillus flavithermus (strain DSM 21510 / WK1).